Consider the following 129-residue polypeptide: Natriuretic peptides B (129 aa).

Positions 1–26 (MDPQTALSRALLLLLFLHLSLLGCRS) are cleaved as a signal peptide. Cys107 and Cys123 are oxidised to a cystine.

It belongs to the natriuretic peptide family. Post-translationally, the precursor molecule is proteolytically cleaved, possibly by FURIN or CORIN, to produce the active peptide. May undergo further proteolytic cleavage by various proteases such as DPP4, MME and possibly FAP, to give rise to a variety of shorter peptides. May be cleaved at Pro-99 by the prolyl endopeptidase FAP (seprase) activity (in vitro). May be degraded by IDE. During IDE degradation, the resulting products initially increase the activation of NPR1 and can also stimulate NPR2 to produce cGMP before the fragments are completely degraded and inactivated by IDE (in vitro).

Its subcellular location is the secreted. Cardiac hormone that plays a key role in mediating cardio-renal homeostasis. May also function as a paracrine antifibrotic factor in the heart. Acts by specifically binding and stimulating NPR1 to produce cGMP, which in turn activates effector proteins that drive various biological responses. Involved in regulating the extracellular fluid volume and maintaining the fluid-electrolyte balance through natriuresis, diuresis, vasorelaxation, and inhibition of renin and aldosterone secretion. Binds the clearance receptor NPR3. This Bos taurus (Bovine) protein is Natriuretic peptides B (NPPB).